The chain runs to 819 residues: Leucine--tRNA ligase (819 aa).

The short motif at 40–51 (PYPSGAGLHVGH) is the 'HIGH' region element. The 'KMSKS' region motif lies at 600 to 604 (KMSKS). Residue Lys-603 coordinates ATP.

The protein belongs to the class-I aminoacyl-tRNA synthetase family.

Its subcellular location is the cytoplasm. The catalysed reaction is tRNA(Leu) + L-leucine + ATP = L-leucyl-tRNA(Leu) + AMP + diphosphate. In Chlamydia trachomatis serovar D (strain ATCC VR-885 / DSM 19411 / UW-3/Cx), this protein is Leucine--tRNA ligase.